The chain runs to 259 residues: Ovulation prohormone (259 aa).

Positions 1–34 (MKMSGLLSKPDYGVVGIVFTVVFCCWCSSSTTHA) are cleaved as a signal peptide. The propeptide occupies 35–102 (LSIAEPGRDR…SGEKTRLTAA (68 aa)). The tract at residues 42–103 (RDRYDKRSPT…GEKTRLTAAK (62 aa)) is disordered. 2 repeats span residues 119 to 123 (RLRFH) and 146 to 150 (RLRFH). Residues 119-150 (RLRFHKRRVDSADESNDDGFDRKAREPRLRFH) form a 2 X 5 AA repeats of R-L-R-F-H region. Residues 149–197 (FHDVRKRSATAEEGSENAEIEESHLGNSRSRRSAGSAPSSANEVQRSKR) form a disordered region. A propeptide spanning residues 181 to 195 (SAGSAPSSANEVQRS) is cleaved from the precursor. At Leu-233 the chain carries Leucine amide. Residues 237-259 (GSAFFDHIPIIFGEPQYDYQPFK) constitute a propeptide that is removed on maturation.

Belongs to the molluscan ELH family.

Its subcellular location is the secreted. Functionally, CDCH induces ovulation and egg-mass production; it may also stimulate synthesis of secretory products in the female accessory sex glands and affect neurons in the neuronal circuits controlling locomotion and feeding. Its function is as follows. Calfluxin is involved in the influx of calcium into mitochondria of the albumen gland. In terms of biological role, CDCA (or alpha-CDCP) triggers the electrical activity of the caudodorsal cells (CDCS). This Lymnaea stagnalis (Great pond snail) protein is Ovulation prohormone.